The sequence spans 151 residues: Endoribonuclease YbeY (151 aa).

Residues histidine 117, histidine 121, and histidine 127 each contribute to the Zn(2+) site.

The protein belongs to the endoribonuclease YbeY family. Zn(2+) is required as a cofactor.

Its subcellular location is the cytoplasm. Single strand-specific metallo-endoribonuclease involved in late-stage 70S ribosome quality control and in maturation of the 3' terminus of the 16S rRNA. In Alkaliphilus oremlandii (strain OhILAs) (Clostridium oremlandii (strain OhILAs)), this protein is Endoribonuclease YbeY.